The primary structure comprises 657 residues: UvrABC system protein B (657 aa).

The 386-residue stretch at 24–409 folds into the Helicase ATP-binding domain; sequence AGVRNQVKSQ…SGHIVQQIIR (386 aa). 37-44 contributes to the ATP binding site; sequence GTTGSGKT. The short motif at 90–113 is the Beta-hairpin element; that stretch reads YYDYYQPEAYIARSDTYIEKSLLI. The Helicase C-terminal domain maps to 426–589; sequence QVDDLLEEIR…IVPKPIIKAI (164 aa). The UVR domain maps to 617–652; it reads EEQIKKYEALMQRAAKEFRFNEAAKYRDAMQACKEQ.

It belongs to the UvrB family. As to quaternary structure, forms a heterotetramer with UvrA during the search for lesions. Interacts with UvrC in an incision complex.

The protein resides in the cytoplasm. In terms of biological role, the UvrABC repair system catalyzes the recognition and processing of DNA lesions. A damage recognition complex composed of 2 UvrA and 2 UvrB subunits scans DNA for abnormalities. Upon binding of the UvrA(2)B(2) complex to a putative damaged site, the DNA wraps around one UvrB monomer. DNA wrap is dependent on ATP binding by UvrB and probably causes local melting of the DNA helix, facilitating insertion of UvrB beta-hairpin between the DNA strands. Then UvrB probes one DNA strand for the presence of a lesion. If a lesion is found the UvrA subunits dissociate and the UvrB-DNA preincision complex is formed. This complex is subsequently bound by UvrC and the second UvrB is released. If no lesion is found, the DNA wraps around the other UvrB subunit that will check the other stand for damage. This Chlamydia pneumoniae (Chlamydophila pneumoniae) protein is UvrABC system protein B.